Here is a 193-residue protein sequence, read N- to C-terminus: uncharacterized protein (193 aa).

This is an uncharacterized protein from Bacillus subtilis (strain 168).